The following is a 540-amino-acid chain: MAKEIKFSEEARRAMLRGVDKLADAVKVTLGPKGRNVVLEKKFGSPLITNDGVTIAKEIELEDPFENMGAKLVAEVASKTNDIAGDGTTTATVLAQAMIREGLKNVAAGANPMGIRRGIEKAVAVAVEELKAISKPIKGKESIAQVAAISAADEEVGQLIAEAMERVGNDGVITLEESKGFTTELDVVEGMQFDRGYVSPYMITDTEKMEAVLENPYILITDKKVSNIQELLPVLEQVVQQGRPLLIIAEDVEGEALATLVVNKLRGTFNAVAVKAPGFGDRRKAMLEDIAILTGGEVISEELGRELKSTTVASLGRASKVVVTKETTTIVEGAGDSERIKARINQIRAQLEETTSEFDREKLQERLAKLAGGVAVIKVGAATETELKERKLRIEDALNSTRAAVEEGIVAGGGTALMNVYSKVAAIEAEGDEATGVKIVLRAIEEPVRQIAQNAGLEGSIIVERLKNEKAGIGFNAATGEWVDMIEEGIVDPTKVTRSALQNAASVAAMVLTTEAVVADKPEENKGGANPGMPDMGGMM.

Residues 29-32, 86-90, glycine 413, 476-478, and aspartate 492 contribute to the ATP site; these read TLGP, DGTTT, and NAA.

The protein belongs to the chaperonin (HSP60) family. Forms a cylinder of 14 subunits composed of two heptameric rings stacked back-to-back. Interacts with the co-chaperonin GroES.

Its subcellular location is the cytoplasm. The enzyme catalyses ATP + H2O + a folded polypeptide = ADP + phosphate + an unfolded polypeptide.. Functionally, together with its co-chaperonin GroES, plays an essential role in assisting protein folding. The GroEL-GroES system forms a nano-cage that allows encapsulation of the non-native substrate proteins and provides a physical environment optimized to promote and accelerate protein folding. The chain is Chaperonin GroEL from Geobacillus thermodenitrificans (strain NG80-2).